Reading from the N-terminus, the 602-residue chain is Trichothecene efflux pump TRI12 (602 aa).

4 helical membrane passes run 49 to 69, 77 to 97, 107 to 127, and 134 to 154; these read LTLL…SFII, NVSL…LLMG, GFIL…LYSF, and IGAQ…ILFI. N-linked (GlcNAc...) asparagine glycosylation occurs at Asn-160. 11 helical membrane-spanning segments follow: residues 164-184, 196-216, 240-260, 271-291, 297-317, 355-375, 380-400, 408-428, 450-470, 484-504, and 532-552; these read FLGN…GPYI, WIFY…FIFY, WIGA…VSWG, ILGL…YECY, PIIP…MLLI, STAG…FHIF, WQLI…ASVN, IAFS…TMLL, AICG…KFPG, WGFP…LTGQ, and AAAY…AIIA. Residue Asn-590 is glycosylated (N-linked (GlcNAc...) asparagine).

Belongs to the major facilitator superfamily.

The protein resides in the cell membrane. Functionally, efflux pump that provides the dual role of trichothecene export and self-protection by allowing the fungus to evade the harmful effect of its own trichothecene production. This chain is Trichothecene efflux pump TRI12, found in Trichoderma arundinaceum.